A 546-amino-acid polypeptide reads, in one-letter code: 2-isopropylmalate synthase (546 aa).

The Pyruvate carboxyltransferase domain occupies 8–271 (ILIFDTTLRD…NKFFNRNSDS (264 aa)). Asp17, His208, His210, and Asn244 together coordinate Mn(2+). Positions 408–546 (QLSLVQVSCG…DKTLLSNPGK (139 aa)) are regulatory domain.

Belongs to the alpha-IPM synthase/homocitrate synthase family. LeuA type 1 subfamily. In terms of assembly, homodimer. Mn(2+) serves as cofactor.

Its subcellular location is the cytoplasm. It carries out the reaction 3-methyl-2-oxobutanoate + acetyl-CoA + H2O = (2S)-2-isopropylmalate + CoA + H(+). It functions in the pathway amino-acid biosynthesis; L-leucine biosynthesis; L-leucine from 3-methyl-2-oxobutanoate: step 1/4. Functionally, catalyzes the condensation of the acetyl group of acetyl-CoA with 3-methyl-2-oxobutanoate (2-ketoisovalerate) to form 3-carboxy-3-hydroxy-4-methylpentanoate (2-isopropylmalate). The sequence is that of 2-isopropylmalate synthase from Prochlorococcus marinus (strain MIT 9215).